Consider the following 770-residue polypeptide: Jhy protein (770 aa).

5 disordered regions span residues 1–249 (MNKY…SKQY), 295–438 (TVQN…SFVS), 493–527 (HRHE…PQAE), 595–647 (ESQL…KRDV), and 708–740 (DYAK…KEGG). Residues 57-71 (SWSDIKDQIQDKDME) show a composition bias toward basic and acidic residues. Residues 72–85 (PDSLEEDSPSETEE) are compositionally biased toward acidic residues. A compositionally biased stretch (basic and acidic residues) spans 112–134 (HQVEDKYSDLRYDPNWKNKREEG). Positions 218–229 (SGLSQYLKSSSS) are enriched in low complexity. Positions 295–314 (TVQNDKEVENTFMDPEDKWH) are enriched in basic and acidic residues. Residues 340 to 354 (RGQSSDAANGQQPSR) are compositionally biased toward polar residues. Residues 355–370 (RTAKARVRKQRKHQKG) are compositionally biased toward basic residues. A compositionally biased stretch (low complexity) spans 383–398 (QNNQNNPFQQPQNQRQ). A compositionally biased stretch (polar residues) spans 410–438 (AQTNASNPNLQDARTLTHNPKVTSDSFVS). Residues 493-509 (HRHESPSQRAPQSDHHM) show a composition bias toward basic and acidic residues. 2 stretches are compositionally biased toward basic residues: residues 510-521 (NTHRSTKTKKPA) and 625-642 (GKRH…LKGY).

In terms of tissue distribution, expressed in the brain, specifically in hypothalamus, pineal gland, and ependymal cells of the aqueduct of Sylvius, as well as in the choroid plexus of the third ventricle. Expressed in the ependymal cells lining the lateral ventricles (at protein level).

Its function is as follows. Required for the normal development of cilia in brain ependymal cells lining the ventricular surfaces. This chain is Jhy protein, found in Mus musculus (Mouse).